Here is a 121-residue protein sequence, read N- to C-terminus: Large ribosomal subunit protein uL14 (121 aa).

It belongs to the universal ribosomal protein uL14 family. Part of the 50S ribosomal subunit. Forms a cluster with proteins L3 and L19. In the 70S ribosome, L14 and L19 interact and together make contacts with the 16S rRNA in bridges B5 and B8.

Functionally, binds to 23S rRNA. Forms part of two intersubunit bridges in the 70S ribosome. In Prochlorococcus marinus (strain MIT 9303), this protein is Large ribosomal subunit protein uL14.